A 427-amino-acid polypeptide reads, in one-letter code: Glutamate-1-semialdehyde 2,1-aminomutase (427 aa).

K267 carries the post-translational modification N6-(pyridoxal phosphate)lysine.

The protein belongs to the class-III pyridoxal-phosphate-dependent aminotransferase family. HemL subfamily. Homodimer. It depends on pyridoxal 5'-phosphate as a cofactor.

The protein resides in the cytoplasm. It catalyses the reaction (S)-4-amino-5-oxopentanoate = 5-aminolevulinate. The protein operates within porphyrin-containing compound metabolism; protoporphyrin-IX biosynthesis; 5-aminolevulinate from L-glutamyl-tRNA(Glu): step 2/2. The chain is Glutamate-1-semialdehyde 2,1-aminomutase from Thermodesulfovibrio yellowstonii (strain ATCC 51303 / DSM 11347 / YP87).